Consider the following 454-residue polypeptide: Probable spastin homolog Bm1_53365 (454 aa).

Residue 218-225 (GPPGNGKT) coordinates ATP.

Belongs to the AAA ATPase family. Spastin subfamily. Homohexamer. The homohexamer is stabilized by ATP-binding. The homohexamer may adopt a ring conformation through which microtubules pass prior to being severed. Interacts with microtubules.

It localises to the cytoplasm. The protein localises to the cytoskeleton. The protein resides in the perinuclear region. The catalysed reaction is n ATP + n H2O + a microtubule = n ADP + n phosphate + (n+1) alpha/beta tubulin heterodimers.. In terms of biological role, severs microtubules, probably in an ATP-dependent fashion. The protein is Probable spastin homolog Bm1_53365 of Brugia malayi (Filarial nematode worm).